The sequence spans 460 residues: tRNA modification GTPase MnmE (460 aa).

Residues arginine 29, glutamate 86, and lysine 126 each coordinate (6S)-5-formyl-5,6,7,8-tetrahydrofolate. A TrmE-type G domain is found at 222–383 (GMRVVIAGRP…LAEHLKECMG (162 aa)). Residue asparagine 232 participates in K(+) binding. Residues 232–237 (NAGKSS), 251–257 (TAIAGTT), 276–279 (DTAG), and 341–344 (NKAD) each bind GTP. Residue serine 236 participates in Mg(2+) binding. The K(+) site is built by threonine 251, isoleucine 253, and threonine 256. Threonine 257 contacts Mg(2+). Lysine 460 lines the (6S)-5-formyl-5,6,7,8-tetrahydrofolate pocket.

Belongs to the TRAFAC class TrmE-Era-EngA-EngB-Septin-like GTPase superfamily. TrmE GTPase family. As to quaternary structure, homodimer. Heterotetramer of two MnmE and two MnmG subunits. K(+) serves as cofactor.

It is found in the cytoplasm. Functionally, exhibits a very high intrinsic GTPase hydrolysis rate. Involved in the addition of a carboxymethylaminomethyl (cmnm) group at the wobble position (U34) of certain tRNAs, forming tRNA-cmnm(5)s(2)U34. The chain is tRNA modification GTPase MnmE from Pseudoalteromonas atlantica (strain T6c / ATCC BAA-1087).